Here is a 560-residue protein sequence, read N- to C-terminus: 2-succinyl-5-enolpyruvyl-6-hydroxy-3-cyclohexene-1-carboxylate synthase (560 aa).

This sequence belongs to the TPP enzyme family. MenD subfamily. In terms of assembly, homodimer. Requires Mg(2+) as cofactor. The cofactor is Mn(2+). Thiamine diphosphate is required as a cofactor.

It catalyses the reaction isochorismate + 2-oxoglutarate + H(+) = 5-enolpyruvoyl-6-hydroxy-2-succinyl-cyclohex-3-ene-1-carboxylate + CO2. It participates in quinol/quinone metabolism; 1,4-dihydroxy-2-naphthoate biosynthesis; 1,4-dihydroxy-2-naphthoate from chorismate: step 2/7. Its pathway is quinol/quinone metabolism; menaquinone biosynthesis. Its function is as follows. Catalyzes the thiamine diphosphate-dependent decarboxylation of 2-oxoglutarate and the subsequent addition of the resulting succinic semialdehyde-thiamine pyrophosphate anion to isochorismate to yield 2-succinyl-5-enolpyruvyl-6-hydroxy-3-cyclohexene-1-carboxylate (SEPHCHC). The protein is 2-succinyl-5-enolpyruvyl-6-hydroxy-3-cyclohexene-1-carboxylate synthase of Pectobacterium carotovorum subsp. carotovorum (strain PC1).